Here is a 595-residue protein sequence, read N- to C-terminus: Isoprene synthase, chloroplastic (595 aa).

A chloroplast-targeting transit peptide spans 1–37; sequence MATELLCLHRPISLTHKLFRNPLPKVIQATPLTLKLR. A dimethylallyl diphosphate-binding site is contributed by Asp345. Asp345 and Asp349 together coordinate Mg(2+). The DDXXD motif signature appears at 345-349; the sequence is DDIYD. 3 residues coordinate dimethylallyl diphosphate: Glu423, Arg486, and Asn489. Residues Asn489, Ser493, and Glu497 each contribute to the Mg(2+) site.

Belongs to the terpene synthase family. Tpsb subfamily. Mg(2+) serves as cofactor. As to expression, predominantly expressed in leaves.

It localises to the plastid. The protein localises to the chloroplast. The catalysed reaction is dimethylallyl diphosphate = isoprene + diphosphate. The protein operates within terpene metabolism. Its function is as follows. Lyase that catalyzes the formation of isoprene from dimethylallyl diphosphate, but not from isopentenyl diphosphate or geranyl diphosphate. The protein is Isoprene synthase, chloroplastic of Populus alba (White poplar).